We begin with the raw amino-acid sequence, 235 residues long: MSERLPAFWAVIPAAGVGARMAADRPKQYLQLGGRTILEHSLGCFLDHPSLKGLVVSLAADDPYWPSLACAADPRIQRAEGGSERSGSVLNALLQLNALGAGDDDWVLVHDAARPNLSRDDLDKLLAELADDPVGGLLAVPARDTLKRVDKYGRVIETVDRSLIWQAYTPQMFRLGALHRALADSLVADAVITDEASAMEWSGQAPRLIEGRSDNIKVTRPEDLEWLRLRWANRR.

Belongs to the IspD/TarI cytidylyltransferase family. IspD subfamily.

The catalysed reaction is 2-C-methyl-D-erythritol 4-phosphate + CTP + H(+) = 4-CDP-2-C-methyl-D-erythritol + diphosphate. It participates in isoprenoid biosynthesis; isopentenyl diphosphate biosynthesis via DXP pathway; isopentenyl diphosphate from 1-deoxy-D-xylulose 5-phosphate: step 2/6. In terms of biological role, catalyzes the formation of 4-diphosphocytidyl-2-C-methyl-D-erythritol from CTP and 2-C-methyl-D-erythritol 4-phosphate (MEP). This chain is 2-C-methyl-D-erythritol 4-phosphate cytidylyltransferase, found in Pseudomonas fluorescens (strain SBW25).